Reading from the N-terminus, the 431-residue chain is tRNA(Ile)-lysidine synthase (431 aa).

ATP is bound at residue 25-30; it reads SGGPDS.

The protein belongs to the tRNA(Ile)-lysidine synthase family.

It localises to the cytoplasm. The enzyme catalyses cytidine(34) in tRNA(Ile2) + L-lysine + ATP = lysidine(34) in tRNA(Ile2) + AMP + diphosphate + H(+). Ligates lysine onto the cytidine present at position 34 of the AUA codon-specific tRNA(Ile) that contains the anticodon CAU, in an ATP-dependent manner. Cytidine is converted to lysidine, thus changing the amino acid specificity of the tRNA from methionine to isoleucine. The sequence is that of tRNA(Ile)-lysidine synthase from Lactobacillus johnsonii (strain CNCM I-12250 / La1 / NCC 533).